Consider the following 508-residue polypeptide: Citrate lyase alpha chain (508 aa).

Oligomer with a subunit composition of (alpha,beta,gamma)6.

The protein localises to the cytoplasm. It carries out the reaction citrate = oxaloacetate + acetate. The enzyme catalyses citrate + acetyl-CoA = (3S)-citryl-CoA + acetate. Its function is as follows. Represents a citrate:acetyl-ACP transferase. The protein is Citrate lyase alpha chain (citF) of Klebsiella pneumoniae.